Here is a 913-residue protein sequence, read N- to C-terminus: ER degradation-enhancing alpha-mannosidase-like protein 3 (913 aa).

Residues 1 to 15 (MGCPAVEARRWGDMW) form the signal peptide. A glycan (N-linked (GlcNAc...) asparagine) is linked at asparagine 104. Glutamate 132 (proton donor) is an active-site residue. An N-linked (GlcNAc...) asparagine glycan is attached at asparagine 181. Residue aspartate 279 is part of the active site. Glutamate 373 (proton donor) is an active-site residue. Glutamate 391 is an active-site residue. Threonine 477 serves as a coordination point for Ca(2+). An N-linked (GlcNAc...) asparagine glycan is attached at asparagine 497. A PA domain is found at 660 to 766 (LSKHLAGAQG…KEGNIILDAI (107 aa)). An N-linked (GlcNAc...) asparagine glycan is attached at asparagine 797. A disordered region spans residues 823–895 (EESPVSQPEV…NKVQPMESIL (73 aa)). Positions 826 to 839 (PVSQPEVPSSDSPS) are enriched in low complexity. Residues 843–866 (RTSERDITPESQEHKTEETEHSPK) show a composition bias toward basic and acidic residues. Positions 910–913 (KDEL) match the Prevents secretion from ER motif.

The protein belongs to the glycosyl hydrolase 47 family. It depends on Ca(2+) as a cofactor.

Its subcellular location is the endoplasmic reticulum lumen. It catalyses the reaction N(4)-(alpha-D-Man-(1-&gt;2)-alpha-D-Man-(1-&gt;2)-alpha-D-Man-(1-&gt;3)-[alpha-D-Man-(1-&gt;2)-alpha-D-Man-(1-&gt;3)-[alpha-D-Man-(1-&gt;2)-alpha-D-Man-(1-&gt;6)]-alpha-D-Man-(1-&gt;6)]-beta-D-Man-(1-&gt;4)-beta-D-GlcNAc-(1-&gt;4)-beta-D-GlcNAc)-L-asparaginyl-[protein] (N-glucan mannose isomer 9A1,2,3B1,2,3) + 4 H2O = N(4)-(alpha-D-Man-(1-&gt;3)-[alpha-D-Man-(1-&gt;3)-[alpha-D-Man-(1-&gt;6)]-alpha-D-Man-(1-&gt;6)]-beta-D-Man-(1-&gt;4)-beta-D-GlcNAc-(1-&gt;4)-beta-D-GlcNAc)-L-asparaginyl-[protein] (N-glucan mannose isomer 5A1,2) + 4 beta-D-mannose. The catalysed reaction is N(4)-(alpha-D-Man-(1-&gt;2)-alpha-D-Man-(1-&gt;2)-alpha-D-Man-(1-&gt;3)-[alpha-D-Man-(1-&gt;3)-[alpha-D-Man-(1-&gt;2)-alpha-D-Man-(1-&gt;6)]-alpha-D-Man-(1-&gt;6)]-beta-D-Man-(1-&gt;4)-beta-D-GlcNAc-(1-&gt;4)-beta-D-GlcNAc)-L-asparaginyl-[protein] (N-glucan mannose isomer 8A1,2,3B1,3) + 3 H2O = N(4)-(alpha-D-Man-(1-&gt;3)-[alpha-D-Man-(1-&gt;3)-[alpha-D-Man-(1-&gt;6)]-alpha-D-Man-(1-&gt;6)]-beta-D-Man-(1-&gt;4)-beta-D-GlcNAc-(1-&gt;4)-beta-D-GlcNAc)-L-asparaginyl-[protein] (N-glucan mannose isomer 5A1,2) + 3 beta-D-mannose. It functions in the pathway protein modification; protein glycosylation. Functionally, may be involved in endoplasmic reticulum-associated degradation (ERAD). The chain is ER degradation-enhancing alpha-mannosidase-like protein 3 (edem3) from Xenopus laevis (African clawed frog).